A 104-amino-acid polypeptide reads, in one-letter code: Iron-sulfur cluster assembly protein CyaY (104 aa).

Belongs to the frataxin family.

Functionally, involved in iron-sulfur (Fe-S) cluster assembly. May act as a regulator of Fe-S biogenesis. In Vibrio vulnificus (strain CMCP6), this protein is Iron-sulfur cluster assembly protein CyaY.